Reading from the N-terminus, the 587-residue chain is Protein FRIGIDA-ESSENTIAL 1 (587 aa).

Residues K96–E123 form a C3H1-type zinc finger. 3 disordered regions span residues D264–I346, G368–T421, and I467–I492. Residues N294 to L304 are compositionally biased toward low complexity. Residues A470 to D479 show a composition bias toward basic and acidic residues.

As to quaternary structure, component of the transcription activator complex FRI-C composed of FRI, FRL1, SUF4, FLX and FES1. Interacts with FLX, (via C-terminus) with FRI (via C-terminus), and with RIN1, a component of the SWR1 chromatin-remodeling complex. In terms of tissue distribution, expressed in root and shoot apices and vasculature.

It localises to the nucleus. Its function is as follows. Transcriptional activator involved in the FRIGIDA-mediated vernalization pathway, but not in the autonomous flowering pathway. Acts cooperatively with FRI (FRIGIDA) or FRL1 (FRIGIDA-LIKE 1) to promote FLC (FLOWERING LOCUS C) expression. Required for the stabilization of the FRI-C complex. The chain is Protein FRIGIDA-ESSENTIAL 1 (FES1) from Arabidopsis thaliana (Mouse-ear cress).